A 106-amino-acid polypeptide reads, in one-letter code: Putative cytochrome c oxidase subunit 7A3, mitochondrial (106 aa).

The transit peptide at 1–23 (MLWNLLALHQIGQRTISTASHRH) directs the protein to the mitochondrion.

The protein belongs to the cytochrome c oxidase VIIa family.

The protein localises to the mitochondrion inner membrane. This is Putative cytochrome c oxidase subunit 7A3, mitochondrial (COX7A2P2) from Homo sapiens (Human).